Here is a 146-residue protein sequence, read N- to C-terminus: Large ribosomal subunit protein uL22 (146 aa).

It belongs to the universal ribosomal protein uL22 family. Part of the 50S ribosomal subunit.

Functionally, this protein binds specifically to 23S rRNA; its binding is stimulated by other ribosomal proteins, e.g. L4, L17, and L20. It is important during the early stages of 50S assembly. It makes multiple contacts with different domains of the 23S rRNA in the assembled 50S subunit and ribosome. In terms of biological role, the globular domain of the protein is located near the polypeptide exit tunnel on the outside of the subunit, while an extended beta-hairpin is found that lines the wall of the exit tunnel in the center of the 70S ribosome. In Nocardioides sp. (strain ATCC BAA-499 / JS614), this protein is Large ribosomal subunit protein uL22.